A 376-amino-acid chain; its full sequence is MHCAQYAAGRCRSCQWLDKPYPQQLADKQHHLESLLAGHAVTQWLALVFGRESAFRNKAKMVVSGSVERPLLGMLHRDGTPVDLCACPLYPPSFEPVFTVLKTFIARAGLTPYNVARKRGELKFLLLTESTYNGELMLRFVLRSETKLAQLTAALPWLQQQLPQLAVISANIQPVHMAILEGEREIPLTEQQALPERFNQVPLYIRPQSFFQTNPPVAASLYATARQWVQEHEVHSMWDLFCGVGGFGLHCAGPETQLTGIEISAEAIACARQSAEQLGLKNVSFAALDSTRFATAEAQIPELVLVNPPRRGIGRELCDYLSQMAPKFILYSSCNAETMAKDISLLAGYHIERVQLFDMFPHTSHYEVLTLLALRR.

Cys3, Cys11, Cys14, and Cys87 together coordinate [4Fe-4S] cluster. S-adenosyl-L-methionine-binding residues include Gln212, Phe241, Glu262, and Asn307. Cys334 serves as the catalytic Nucleophile.

Belongs to the class I-like SAM-binding methyltransferase superfamily. RNA M5U methyltransferase family. RlmC subfamily.

It catalyses the reaction uridine(747) in 23S rRNA + S-adenosyl-L-methionine = 5-methyluridine(747) in 23S rRNA + S-adenosyl-L-homocysteine + H(+). Catalyzes the formation of 5-methyl-uridine at position 747 (m5U747) in 23S rRNA. The chain is 23S rRNA (uracil(747)-C(5))-methyltransferase RlmC from Yersinia pseudotuberculosis serotype O:1b (strain IP 31758).